Consider the following 288-residue polypeptide: Small ribosomal subunit protein uS15m (288 aa).

The transit peptide at 1-50 (MRLFEGAFQPWKLASTNLMQQCLLLNKKSQFHTTCILQGLKKQKANQRRK) directs the protein to the mitochondrion.

Belongs to the universal ribosomal protein uS15 family. Component of the mitochondrial small ribosomal subunit (mt-SSU). Mature yeast 74S mitochondrial ribosomes consist of a small (37S) and a large (54S) subunit. The 37S small subunit contains a 15S ribosomal RNA (15S mt-rRNA) and at least 32 different proteins. The 54S large subunit contains a 21S rRNA (21S mt-rRNA) and at least 45 different proteins.

The protein localises to the mitochondrion. Component of the mitochondrial ribosome (mitoribosome), a dedicated translation machinery responsible for the synthesis of mitochondrial genome-encoded proteins, including at least some of the essential transmembrane subunits of the mitochondrial respiratory chain. The mitoribosomes are attached to the mitochondrial inner membrane and translation products are cotranslationally integrated into the membrane. In Schizosaccharomyces pombe (strain 972 / ATCC 24843) (Fission yeast), this protein is Small ribosomal subunit protein uS15m (mrps28).